Reading from the N-terminus, the 274-residue chain is MLVHAHPDDESTGTGATMARYANEGATVSLVTCTSGELGEVVADDLAHLRGNPDALGEHRRGEIAEALRELGDIRHHWLGGPGRFRDSGMAGEDTNDAAECFAKADRDDVTRAMVEILRAERPHVVVTYDDTGGYGHPDHIAANHALMYALGPAADPAYLPELGEPWDVPKVYWMTLPRSFVKDVQAAGIEGFEPFTVPDEDITAVLDGRDHHAKKLAALRTYRSQVSLDDGDFFATLVQDPRFAIEHYVLVRGERGPGSGPHNWENDLFAGLD.

Residues H6, D9, and H140 each contribute to the Zn(2+) site.

It belongs to the MshB deacetylase family. Zn(2+) serves as cofactor.

The enzyme catalyses 1D-myo-inositol 2-acetamido-2-deoxy-alpha-D-glucopyranoside + H2O = 1D-myo-inositol 2-amino-2-deoxy-alpha-D-glucopyranoside + acetate. In terms of biological role, catalyzes the deacetylation of 1D-myo-inositol 2-acetamido-2-deoxy-alpha-D-glucopyranoside (GlcNAc-Ins) in the mycothiol biosynthesis pathway. This chain is 1D-myo-inositol 2-acetamido-2-deoxy-alpha-D-glucopyranoside deacetylase 2, found in Saccharopolyspora erythraea (strain ATCC 11635 / DSM 40517 / JCM 4748 / NBRC 13426 / NCIMB 8594 / NRRL 2338).